A 671-amino-acid chain; its full sequence is Probable potassium transport system protein Kup 2 (671 aa).

A run of 12 helical transmembrane segments spans residues 12-32, 56-76, 99-119, 139-159, 172-192, 218-238, 251-271, 296-316, 345-365, 374-394, 400-420, and 429-449; these read FAGL…SPLY, ISLI…MIAL, WLVI…TLTP, IPVP…VILF, AFGP…IANL, VGIL…ALYS, SWPY…AWIL, LFAI…LITG, IYIP…VFLF, AYGL…FEYL, PLYL…MFLI, and GGYV…VWFY.

The protein belongs to the HAK/KUP transporter (TC 2.A.72) family.

The protein localises to the cell membrane. It catalyses the reaction K(+)(in) + H(+)(in) = K(+)(out) + H(+)(out). Transport of potassium into the cell. Likely operates as a K(+):H(+) symporter. This is Probable potassium transport system protein Kup 2 from Lactobacillus acidophilus (strain ATCC 700396 / NCK56 / N2 / NCFM).